Reading from the N-terminus, the 259-residue chain is NAD(P)H-quinone oxidoreductase subunit K 2 (259 aa).

Residues Cys-52, Cys-53, Cys-117, and Cys-148 each contribute to the [4Fe-4S] cluster site.

The protein belongs to the complex I 20 kDa subunit family. In terms of assembly, NDH-1 can be composed of about 15 different subunits; different subcomplexes with different compositions have been identified which probably have different functions. The cofactor is [4Fe-4S] cluster.

It is found in the cellular thylakoid membrane. The catalysed reaction is a plastoquinone + NADH + (n+1) H(+)(in) = a plastoquinol + NAD(+) + n H(+)(out). It carries out the reaction a plastoquinone + NADPH + (n+1) H(+)(in) = a plastoquinol + NADP(+) + n H(+)(out). NDH-1 shuttles electrons from an unknown electron donor, via FMN and iron-sulfur (Fe-S) centers, to quinones in the respiratory and/or the photosynthetic chain. The immediate electron acceptor for the enzyme in this species is believed to be plastoquinone. Couples the redox reaction to proton translocation, and thus conserves the redox energy in a proton gradient. Cyanobacterial NDH-1 also plays a role in inorganic carbon-concentration. The polypeptide is NAD(P)H-quinone oxidoreductase subunit K 2 (ndhK2) (Cyanothece sp. (strain PCC 7425 / ATCC 29141)).